We begin with the raw amino-acid sequence, 103 residues long: Small ribosomal subunit protein uS10 (103 aa).

It belongs to the universal ribosomal protein uS10 family. Part of the 30S ribosomal subunit.

In terms of biological role, involved in the binding of tRNA to the ribosomes. The sequence is that of Small ribosomal subunit protein uS10 from Shewanella pealeana (strain ATCC 700345 / ANG-SQ1).